A 208-amino-acid chain; its full sequence is Outer-membrane lipoprotein carrier protein (208 aa).

The signal sequence occupies residues 1–25 (MKKLFSAKLFSALVLSFSLFSTAHA).

This sequence belongs to the LolA family. In terms of assembly, monomer.

It localises to the periplasm. Functionally, participates in the translocation of lipoproteins from the inner membrane to the outer membrane. Only forms a complex with a lipoprotein if the residue after the N-terminal Cys is not an aspartate (The Asp acts as a targeting signal to indicate that the lipoprotein should stay in the inner membrane). The polypeptide is Outer-membrane lipoprotein carrier protein (Vibrio campbellii (strain ATCC BAA-1116)).